A 229-amino-acid polypeptide reads, in one-letter code: Potassium/proton antiporter CemA (229 aa).

4 helical membrane passes run 6-26 (AFIP…ISLC), 107-127 (IFHF…SFWG), 152-172 (FLIL…GWEL), and 189-209 (ILSG…KYWI).

The protein belongs to the CemA family.

The protein localises to the plastid. It is found in the chloroplast inner membrane. It carries out the reaction K(+)(in) + H(+)(out) = K(+)(out) + H(+)(in). Its function is as follows. Contributes to K(+)/H(+) antiport activity by supporting proton efflux to control proton extrusion and homeostasis in chloroplasts in a light-dependent manner to modulate photosynthesis. Prevents excessive induction of non-photochemical quenching (NPQ) under continuous-light conditions. Indirectly promotes efficient inorganic carbon uptake into chloroplasts. The chain is Potassium/proton antiporter CemA from Aethionema grandiflorum (Persian stone-cress).